The primary structure comprises 91 residues: MARTVQCVYLGKEAEGLDFQLYPGELGKRIFDTISKEAWGEWQKKQTMLINEKKLNMMNMDHRKLLEEQMQLFLFEGKDVQIEGYVPPKPE.

This sequence belongs to the Fe(2+)-trafficking protein family.

Its function is as follows. Could be a mediator in iron transactions between iron acquisition and iron-requiring processes, such as synthesis and/or repair of Fe-S clusters in biosynthetic enzymes. This is Probable Fe(2+)-trafficking protein from Shewanella amazonensis (strain ATCC BAA-1098 / SB2B).